Here is a 311-residue protein sequence, read N- to C-terminus: Aspartate carbamoyltransferase catalytic subunit (311 aa).

Positions 58 and 59 each coordinate carbamoyl phosphate. Lysine 86 is a binding site for L-aspartate. Carbamoyl phosphate contacts are provided by arginine 108, histidine 136, and glutamine 139. Residues arginine 169 and arginine 224 each coordinate L-aspartate. Glycine 265 and proline 266 together coordinate carbamoyl phosphate.

It belongs to the aspartate/ornithine carbamoyltransferase superfamily. ATCase family. In terms of assembly, heterododecamer (2C3:3R2) of six catalytic PyrB chains organized as two trimers (C3), and six regulatory PyrI chains organized as three dimers (R2).

The enzyme catalyses carbamoyl phosphate + L-aspartate = N-carbamoyl-L-aspartate + phosphate + H(+). It participates in pyrimidine metabolism; UMP biosynthesis via de novo pathway; (S)-dihydroorotate from bicarbonate: step 2/3. In terms of biological role, catalyzes the condensation of carbamoyl phosphate and aspartate to form carbamoyl aspartate and inorganic phosphate, the committed step in the de novo pyrimidine nucleotide biosynthesis pathway. The protein is Aspartate carbamoyltransferase catalytic subunit of Geotalea daltonii (strain DSM 22248 / JCM 15807 / FRC-32) (Geobacter daltonii).